The primary structure comprises 345 residues: tRNA pseudouridine synthase B (345 aa).

Positions 1–33 are disordered; it reads MGGNSQPHQEPRRVNNDPRAKQQKGNQVRRDRR. Residues 9-20 show a composition bias toward basic and acidic residues; the sequence is QEPRRVNNDPRA. The active-site Nucleophile is the Asp-72.

Belongs to the pseudouridine synthase TruB family. Type 1 subfamily.

It catalyses the reaction uridine(55) in tRNA = pseudouridine(55) in tRNA. Responsible for synthesis of pseudouridine from uracil-55 in the psi GC loop of transfer RNAs. The protein is tRNA pseudouridine synthase B of Bradyrhizobium diazoefficiens (strain JCM 10833 / BCRC 13528 / IAM 13628 / NBRC 14792 / USDA 110).